A 235-amino-acid polypeptide reads, in one-letter code: Large ribosomal subunit protein uL3 (235 aa).

The residue at position 151 (Q151) is an N5-methylglutamine.

This sequence belongs to the universal ribosomal protein uL3 family. In terms of assembly, part of the 50S ribosomal subunit. Forms a cluster with proteins L14 and L19. Methylated by PrmB.

In terms of biological role, one of the primary rRNA binding proteins, it binds directly near the 3'-end of the 23S rRNA, where it nucleates assembly of the 50S subunit. This chain is Large ribosomal subunit protein uL3, found in Rhodospirillum rubrum (strain ATCC 11170 / ATH 1.1.1 / DSM 467 / LMG 4362 / NCIMB 8255 / S1).